Here is a 66-residue protein sequence, read N- to C-terminus: Beta-toxin Cbo2 (66 aa).

The LCN-type CS-alpha/beta domain occupies 1 to 66 (KEGYIVNYHD…VWPLPKKTCN (66 aa)). Intrachain disulfides connect cysteine 12–cysteine 65, cysteine 16–cysteine 41, cysteine 25–cysteine 46, and cysteine 29–cysteine 48. Asparagine 66 carries the post-translational modification Asparagine amide.

Belongs to the long (4 C-C) scorpion toxin superfamily. Sodium channel inhibitor family. Beta subfamily. As to expression, expressed by the venom gland.

Its subcellular location is the secreted. Beta toxins bind voltage-independently at site-4 of sodium channels and shift the voltage of activation toward more negative potentials thereby affecting sodium channel activation and promoting spontaneous and repetitive firing. A mixture of Cbo2 and Cbo3 is weakly active on the human voltage-gated sodium channels Nav1.4/SCN4A and Nav1.6/SCN8A when tested at 200 nM. In vivo, is toxic to mice when intraperitoneally injected. This Centruroides bonito (Scorpion) protein is Beta-toxin Cbo2.